The sequence spans 344 residues: MKSSLLVVLTAGLAVRDAIAHAIFQQLWVDGVDYGSTCNRLPTSNSPVTNVGSRDVVCNAGTRGVSGKCPVKAGGTVTVEMHQQPGDRSCKSEAIGGAHWGPVQIYLSKVSDASTADGSSGGWFKIFSDAWSKKSGGRVGDDDNWGTRDLNACCGRMDVLIPKDLPSGDYLLRAEALALHTAGQSGGAQFYISCYQITVSGGGSANYATVKFPGAYRASDPGIQINIHAVVSNYVAPGPAVVAGGVTKQAGSGCIGCESTCKVGSSPSAVAPGGKPASGGSDGNAPEVAEPSGGEGSPSAPGACEVAAYGQCGGDQYSGCTQCASGYTCKAVSPPYYSQCAPTS.

Positions 1 to 20 (MKSSLLVVLTAGLAVRDAIA) are cleaved as a signal peptide. Residues His-21 and His-99 each coordinate Cu(2+). A disulfide bridge links Cys-58 with Cys-194. 2 residues coordinate O2: His-180 and Gln-189. Tyr-191 contributes to the Cu(2+) binding site. Positions 272–301 (PGGKPASGGSDGNAPEVAEPSGGEGSPSAP) are disordered. Low complexity predominate over residues 285–301 (APEVAEPSGGEGSPSAP). Residues 304–341 (CEVAAYGQCGGDQYSGCTQCASGYTCKAVSPPYYSQCA) form the CBM1 domain.

The protein belongs to the polysaccharide monooxygenase AA9 family. The cofactor is Cu(2+).

The protein localises to the secreted. The catalysed reaction is [(1-&gt;4)-beta-D-glucosyl]n+m + reduced acceptor + O2 = 4-dehydro-beta-D-glucosyl-[(1-&gt;4)-beta-D-glucosyl]n-1 + [(1-&gt;4)-beta-D-glucosyl]m + acceptor + H2O.. Lytic polysaccharide monooxygenase (LPMO) that depolymerizes crystalline and amorphous polysaccharides via the oxidation of scissile alpha- or beta-(1-4)-glycosidic bonds, yielding C4 oxidation products. Catalysis by LPMOs requires the reduction of the active-site copper from Cu(II) to Cu(I) by a reducing agent and H(2)O(2) or O(2) as a cosubstrate. The chain is AA9 family lytic polysaccharide monooxygenase J (gh61-10) from Neurospora crassa (strain ATCC 24698 / 74-OR23-1A / CBS 708.71 / DSM 1257 / FGSC 987).